The chain runs to 620 residues: DNA mismatch repair protein MutL (620 aa).

This sequence belongs to the DNA mismatch repair MutL/HexB family.

In terms of biological role, this protein is involved in the repair of mismatches in DNA. It is required for dam-dependent methyl-directed DNA mismatch repair. May act as a 'molecular matchmaker', a protein that promotes the formation of a stable complex between two or more DNA-binding proteins in an ATP-dependent manner without itself being part of a final effector complex. This is DNA mismatch repair protein MutL from Clostridium tetani (strain Massachusetts / E88).